Reading from the N-terminus, the 540-residue chain is Phosphoenolpyruvate carboxykinase (ATP) (540 aa).

Position 65 (R65) interacts with substrate. Position 87 is an N6-acetyllysine (K87). Y207 and K213 together coordinate substrate. ATP contacts are provided by residues K213, H232, and 248–256 (GLSGTGKTT). 2 residues coordinate Mn(2+): K213 and H232. Position 269 (D269) interacts with Mn(2+). Residues E297, R333, 449–450 (RI), and T455 each bind ATP. R333 provides a ligand contact to substrate. K523 bears the N6-acetyllysine mark.

It belongs to the phosphoenolpyruvate carboxykinase (ATP) family. In terms of assembly, monomer. It depends on Mn(2+) as a cofactor.

It is found in the cytoplasm. It catalyses the reaction oxaloacetate + ATP = phosphoenolpyruvate + ADP + CO2. It functions in the pathway carbohydrate biosynthesis; gluconeogenesis. Its function is as follows. Involved in the gluconeogenesis. Catalyzes the conversion of oxaloacetate (OAA) to phosphoenolpyruvate (PEP) through direct phosphoryl transfer between the nucleoside triphosphate and OAA. The protein is Phosphoenolpyruvate carboxykinase (ATP) of Escherichia coli O6:H1 (strain CFT073 / ATCC 700928 / UPEC).